Here is a 194-residue protein sequence, read N- to C-terminus: Der GTPase-activating protein YihI (194 aa).

The segment at 1-81 (MSRSKKTRRI…AKVKKDPRVG (81 aa)) is disordered. 2 stretches are compositionally biased toward basic and acidic residues: residues 9–23 (RISDIMPARKADKKP) and 36–47 (TRYELDVQAREE). Positions 59–70 (GSRNVITEQKTA) are enriched in polar residues.

Belongs to the YihI family. Interacts with Der.

In terms of biological role, a GTPase-activating protein (GAP) that modifies Der/EngA GTPase function. May play a role in ribosome biogenesis. This Haemophilus ducreyi (strain 35000HP / ATCC 700724) protein is Der GTPase-activating protein YihI.